A 157-amino-acid chain; its full sequence is MTIEIGQKAPDLELKGDHGETVKLSDYKGKYIVLYFYPKDMTPGCTTEACDFRDSHESFAELDAVIIGVSPDSQEKHGKFKEKHNLPFLLLVDDEHKLAEAFDVWKLKKNFGKEYMGIERSTFLIDKEGRLIKEWRKVKVKDHVAEALQTLKDMSEK.

In terms of domain architecture, Thioredoxin spans 3–156 (IEIGQKAPDL…ALQTLKDMSE (154 aa)). The active-site Cysteine sulfenic acid (-SOH) intermediate is the Cys45. An intrachain disulfide couples Cys45 to Cys50.

This sequence belongs to the peroxiredoxin family. BCP/PrxQ subfamily. As to quaternary structure, monomer.

It carries out the reaction a hydroperoxide + [thioredoxin]-dithiol = an alcohol + [thioredoxin]-disulfide + H2O. In terms of biological role, thiol-specific peroxidase that catalyzes the reduction of hydrogen peroxide and organic hydroperoxides to water and alcohols, respectively. Plays a role in cell protection against oxidative stress by detoxifying peroxides and as sensor of hydrogen peroxide-mediated signaling events. In Bacillus subtilis (strain 168), this protein is Peroxiredoxin Bcp (ygaF).